Here is a 355-residue protein sequence, read N- to C-terminus: Peptide chain release factor 1 (355 aa).

Gln-231 carries the N5-methylglutamine modification.

The protein belongs to the prokaryotic/mitochondrial release factor family. Post-translationally, methylated by PrmC. Methylation increases the termination efficiency of RF1.

It localises to the cytoplasm. In terms of biological role, peptide chain release factor 1 directs the termination of translation in response to the peptide chain termination codons UAG and UAA. In Wolinella succinogenes (strain ATCC 29543 / DSM 1740 / CCUG 13145 / JCM 31913 / LMG 7466 / NCTC 11488 / FDC 602W) (Vibrio succinogenes), this protein is Peptide chain release factor 1.